Reading from the N-terminus, the 605-residue chain is 9-cis-epoxycarotenoid dioxygenase NCED1, chloroplastic (605 aa).

A chloroplast-targeting transit peptide spans 1–16 (MATTTSHATNTWIKTK). Residues 55 to 89 (ILHFPKQSSNYQTPKNNTISHPKQENNNSSSSSTS) form a disordered region. Over residues 60-75 (KQSSNYQTPKNNTISH) the composition is skewed to polar residues. Positions 80-89 (NNNSSSSSTS) are enriched in low complexity. The Fe cation site is built by H302, H351, H416, and H592.

This sequence belongs to the carotenoid oxygenase family. It depends on Fe(2+) as a cofactor. Expressed in developing and ripening fruits. Highly expressed in pulp. Observed in unpollinated ovaries (e.g. ovules, placenta and pericarp). Expressed in flowers.

The protein resides in the plastid. The protein localises to the chloroplast stroma. The enzyme catalyses a 9-cis-epoxycarotenoid + O2 = a 12'-apo-carotenal + 2-cis,4-trans-xanthoxin. The catalysed reaction is 9-cis-violaxanthin + O2 = (3S,5R,6S)-5,6-epoxy-3-hydroxy-5,6-dihydro-12'-apo-beta-caroten-12'-al + 2-cis,4-trans-xanthoxin. It catalyses the reaction 9'-cis-neoxanthin + O2 = (3S,5R,6R)-3,5-dihydroxy-6,7-didehydro-5,6-dihydro-12'-apo-beta-caroten-12'-al + 2-cis,4-trans-xanthoxin. Its pathway is plant hormone biosynthesis; abscisate biosynthesis. Its function is as follows. Has a 11,12(11',12') 9-cis epoxycarotenoid cleavage activity. Catalyzes the first step of abscisic-acid (ABA) biosynthesis from carotenoids. Required for ABA accumulation upon drought. Required for ABA-mediated regulation of anther/pollen development, including metabolism, cell wall modification and transcription level. Positive regulator of fruit ripening involved in the biosynthesis of abscisic acid (ABA); initiates ABA biosynthesis at the onset of fruit ripening. Modulates the degree of pigmentation and carotenoid composition as well as pectin catabolism during ripening and may regulate the ethylene production and action in climacteric tomato fruit. The sequence is that of 9-cis-epoxycarotenoid dioxygenase NCED1, chloroplastic from Solanum lycopersicum (Tomato).